A 234-amino-acid polypeptide reads, in one-letter code: Aspartate/glutamate leucyltransferase (234 aa).

The protein belongs to the R-transferase family. Bpt subfamily.

It is found in the cytoplasm. The enzyme catalyses N-terminal L-glutamyl-[protein] + L-leucyl-tRNA(Leu) = N-terminal L-leucyl-L-glutamyl-[protein] + tRNA(Leu) + H(+). It catalyses the reaction N-terminal L-aspartyl-[protein] + L-leucyl-tRNA(Leu) = N-terminal L-leucyl-L-aspartyl-[protein] + tRNA(Leu) + H(+). In terms of biological role, functions in the N-end rule pathway of protein degradation where it conjugates Leu from its aminoacyl-tRNA to the N-termini of proteins containing an N-terminal aspartate or glutamate. The sequence is that of Aspartate/glutamate leucyltransferase from Hahella chejuensis (strain KCTC 2396).